Here is a 64-residue protein sequence, read N- to C-terminus: MRCVPVFIILLLLSPSAPSVDAHPKTKDDVPLASFHDDAKRTLQRLWIKALCCYGYRFCCPNFR.

The signal sequence occupies residues 1–22; the sequence is MRCVPVFIILLLLSPSAPSVDA. Residues 23 to 48 constitute a propeptide that is removed on maturation; sequence HPKTKDDVPLASFHDDAKRTLQRLWI.

This sequence belongs to the conotoxin T superfamily. In terms of processing, contains 2 disulfide bonds that can be either 'C1-C3, C2-C4' or 'C1-C4, C2-C3', since these disulfide connectivities have been observed for conotoxins with cysteine framework V (for examples, see AC P0DQQ7 and AC P81755). Expressed by the venom duct.

It is found in the secreted. In Conus lividus (Livid cone), this protein is Conotoxin LiC121.